The sequence spans 180 residues: Beta-lactoglobulin (180 aa).

A signal peptide spans 1 to 18; it reads MKCLLLALGLALACGIQA. 3 cysteine pairs are disulfide-bonded: cysteine 84/cysteine 178, cysteine 124/cysteine 137, and cysteine 124/cysteine 139.

This sequence belongs to the calycin superfamily. Lipocalin family. As to quaternary structure, under physiological conditions beta-lactoglobulin exists as an equilibrium mixture of monomeric and dimeric forms. Interaction with LMBR1L is controversial. Alternate disulfide bonds occur in equal amounts. Synthesized in mammary gland and secreted in milk.

It is found in the secreted. Primary component of whey, it binds retinol and is probably involved in the transport of that molecule. The polypeptide is Beta-lactoglobulin (LGB) (Capra hircus (Goat)).